A 246-amino-acid polypeptide reads, in one-letter code: Proteasome subunit alpha (246 aa).

The protein belongs to the peptidase T1A family. As to quaternary structure, the 20S proteasome core is composed of 14 alpha and 14 beta subunits that assemble into four stacked heptameric rings, resulting in a barrel-shaped structure. The two inner rings, each composed of seven catalytic beta subunits, are sandwiched by two outer rings, each composed of seven alpha subunits. The catalytic chamber with the active sites is on the inside of the barrel. Has probably a gated structure, the ends of the cylinder being occluded by the N-termini of the alpha-subunits. Is likely capped at one or both ends by the proteasome regulatory ATPase, PAN.

The protein resides in the cytoplasm. With respect to regulation, the formation of the proteasomal ATPase PAN-20S proteasome complex, via the docking of the C-termini of PAN into the intersubunit pockets in the alpha-rings, triggers opening of the gate for substrate entry. Interconversion between the open-gate and close-gate conformations leads to a dynamic regulation of the 20S proteasome proteolysis activity. Functionally, component of the proteasome core, a large protease complex with broad specificity involved in protein degradation. This is Proteasome subunit alpha from Archaeoglobus fulgidus (strain ATCC 49558 / DSM 4304 / JCM 9628 / NBRC 100126 / VC-16).